Consider the following 153-residue polypeptide: Putative pre-16S rRNA nuclease (153 aa).

It belongs to the YqgF nuclease family.

It is found in the cytoplasm. In terms of biological role, could be a nuclease involved in processing of the 5'-end of pre-16S rRNA. The sequence is that of Putative pre-16S rRNA nuclease from Koribacter versatilis (strain Ellin345).